The primary structure comprises 522 residues: Occludin (522 aa).

Residues M1–N20 are disordered. At M1–R66 the chain is on the cytoplasmic side. Residues S60–R269 form the MARVEL domain. The chain crosses the membrane as a helical span at residues I67–W89. Residues D90–R135 are Extracellular-facing. Residues A136–V160 traverse the membrane as a helical segment. At I161–R170 the chain is on the cytoplasmic side. The chain crosses the membrane as a helical span at residues Y171–M195. The Extracellular portion of the chain corresponds to G196–E243. C216 and C237 are joined by a disulfide. A helical transmembrane segment spans residues A244–V265. The Cytoplasmic portion of the chain corresponds to K266 to T522. S302 carries the phosphoserine modification. T305 is subject to Phosphothreonine. Phosphoserine occurs at positions 313, 321, and 340. A disordered region spans residues V360–E407. The segment covering R367 to T376 has biased composition (polar residues). Phosphotyrosine is present on Y368. 2 positions are modified to phosphoserine: S369 and S370. The segment covering A381–S390 has biased composition (basic residues). Residues K391 to T400 show a composition bias toward basic and acidic residues. A phosphotyrosine mark is found at Y398 and Y402. Phosphothreonine; by PKC/PRKCH occurs at positions 403 and 404. At S408 the chain carries Phosphoserine. The region spanning E414 to T522 is the OCEL domain. A coiled-coil region spans residues D426–G489. S490 carries the phosphoserine modification.

Belongs to the ELL/occludin family. In terms of assembly, interacts with TJP1/ZO1. Interacts with VAPA. Interacts with CLDN1, CLDN6, CLDN9, CLDN11, CLDN12 and CLDN17. Interacts with PLSCR1. Interacts with LSR, ILDR1 and ILDR2. Interacts with TJP2/ZO2. In terms of processing, dephosphorylated by PTPRJ. The tyrosine phosphorylation on Tyr-398 and Tyr-402 reduces its ability to interact with TJP1. Phosphorylation at Ser-490 also attenuates the interaction with TJP1. (Microbial infection) Cleaved by S.pyogenes SpeB protease; leading to its degradation. Degradation by SpeB promotes bacterial translocation across the host epithelial barrier. In terms of tissue distribution, localized at tight junctions of both epithelial and endothelial cells. Highly expressed in kidney. Not detected in testis.

It localises to the cell membrane. It is found in the cell junction. The protein localises to the tight junction. Its function is as follows. May play a role in the formation and regulation of the tight junction (TJ) paracellular permeability barrier. It is able to induce adhesion when expressed in cells lacking tight junctions. (Microbial infection) Acts as a coreceptor for hepatitis C virus (HCV) in hepatocytes. The sequence is that of Occludin (OCLN) from Homo sapiens (Human).